The primary structure comprises 151 residues: Macrodomain Ter protein (151 aa).

This sequence belongs to the MatP family. As to quaternary structure, homodimer.

The protein localises to the cytoplasm. Its function is as follows. Required for spatial organization of the terminus region of the chromosome (Ter macrodomain) during the cell cycle. Prevents early segregation of duplicated Ter macrodomains during cell division. Binds specifically to matS, which is a 13 bp signature motif repeated within the Ter macrodomain. In Escherichia fergusonii (strain ATCC 35469 / DSM 13698 / CCUG 18766 / IAM 14443 / JCM 21226 / LMG 7866 / NBRC 102419 / NCTC 12128 / CDC 0568-73), this protein is Macrodomain Ter protein.